The primary structure comprises 777 residues: Mediator of RNA polymerase II transcription subunit 15 (777 aa).

Disordered stretches follow at residues 120-139 and 418-520; these read MNLP…HGIT and SIPV…EEQQ. Low complexity predominate over residues 420-434; that stretch reads PVMSSPSPVQQVQTP. The span at 435–448 shows a compositional bias: pro residues; it reads QPMPPPPQPSPQPS. Positions 449–471 are enriched in low complexity; the sequence is QPMSQPNSNVSSGPAPSPSSFMP. Over residues 500 to 519 the composition is skewed to polar residues; the sequence is TPGNPNSVMSPASNNQSEEQ.

This sequence belongs to the Mediator complex subunit 15 family. As to quaternary structure, component of the Mediator complex. Interacts with srebf1 and srebf2. Interacts with smad2, smad3 and smad4.

The protein resides in the cytoplasm. It is found in the nucleus. Its function is as follows. Component of the Mediator complex, a coactivator involved in the regulated transcription of nearly all RNA polymerase II-dependent genes. Mediator functions as a bridge to convey information from gene-specific regulatory proteins to the basal RNA polymerase II transcription machinery. Mediator is recruited to promoters by direct interactions with regulatory proteins and serves as a scaffold for the assembly of a functional preinitiation complex with RNA polymerase II and the general transcription factors. Required for cholesterol-dependent gene regulation. Positively regulates the Nodal signaling pathway. This chain is Mediator of RNA polymerase II transcription subunit 15 (med15), found in Xenopus laevis (African clawed frog).